A 149-amino-acid polypeptide reads, in one-letter code: MDNEQLQKLTEDISLQDFGKPFRHRAFFNDRLKTTGGRYMLSSHNIELNRKYLIEHGRSELVGIIKHELCHYHLHLEGKGYKHRDKDFRDLLQKVGAPRFCTPLQTKKTQKKTYMYRCAACGQQYIKKRAMNPERYACGKCRGKIKRIF.

The region spanning 6–147 (LQKLTEDISL…CGKCRGKIKR (142 aa)) is the SprT-like domain. Zn(2+) is bound at residue histidine 67. Glutamate 68 is an active-site residue. Histidine 71 serves as a coordination point for Zn(2+).

It belongs to the SprT family. Requires Zn(2+) as cofactor.

The protein localises to the cytoplasm. This chain is Protein SprT-like, found in Bacillus velezensis (strain DSM 23117 / BGSC 10A6 / LMG 26770 / FZB42) (Bacillus amyloliquefaciens subsp. plantarum).